A 357-amino-acid chain; its full sequence is Protein-glutamate methylesterase/protein-glutamine glutaminase (357 aa).

The 118-residue stretch at 3–120 (RVLVVDDSAF…SIDLYKVRDM (118 aa)) folds into the Response regulatory domain. D54 is modified (4-aspartylphosphate). Residues 161-355 (FRAGKQLICI…AAIMTYMKKE (195 aa)) form the CheB-type methylesterase domain. Catalysis depends on residues S173, H200, and D296.

Belongs to the CheB family. Phosphorylated by CheA. Phosphorylation of the N-terminal regulatory domain activates the methylesterase activity.

Its subcellular location is the cytoplasm. It carries out the reaction [protein]-L-glutamate 5-O-methyl ester + H2O = L-glutamyl-[protein] + methanol + H(+). The enzyme catalyses L-glutaminyl-[protein] + H2O = L-glutamyl-[protein] + NH4(+). Involved in chemotaxis. Part of a chemotaxis signal transduction system that modulates chemotaxis in response to various stimuli. Catalyzes the demethylation of specific methylglutamate residues introduced into the chemoreceptors (methyl-accepting chemotaxis proteins or MCP) by CheR. Also mediates the irreversible deamidation of specific glutamine residues to glutamic acid. The chain is Protein-glutamate methylesterase/protein-glutamine glutaminase from Bacillus licheniformis (strain ATCC 14580 / DSM 13 / JCM 2505 / CCUG 7422 / NBRC 12200 / NCIMB 9375 / NCTC 10341 / NRRL NRS-1264 / Gibson 46).